A 57-amino-acid chain; its full sequence is DELTA-limacoditoxin(2)-Dv11 (57 aa).

Positions 1-24 are cleaved as a signal peptide; it reads MKFAKTFLLLFVVLLLLSIVMAEP.

It belongs to the limacoditoxin-2 (cecropin-like) family. As to expression, expressed by the venom secretory cell of the spine. The spine is a cuticular structure containing a single large nucleated venom-secreting cell at its base. It is an independent unit capable of producing, storing and injecting venom. On the back of D.vulnerans caterpillars, spines are grouped together by 50 to 100 to form scoli, of which there are eight in D.vulnerans.

Its subcellular location is the secreted. Its function is as follows. Peptide that induces pain in mammals and has insecticidal, antibacterial and antiparasitic activities. Induces partially reversible paralysis in D.melanogaster when tested at high doses. Shows a moderate antiparasitic activity against the major pathogenic nematode of ruminants (H.contortus, EC(50)=30.5 uM). Has potent or moderate antibacterial activities against A.baumannii (MIC&lt;0.25 ug/mL) and S.aureus (MIC=16 ug/mL). Has no activity on the other bacteria tested, nor on the fungus C.albicans. Strongly induces the increase of intracellular calcium in mice DRG neurons, which is a proxy for neuronal activation that would occur during nociception. This increase is due to influx of extracellular calcium, suggesting that the peptide forms pore or channel in neuronal cell membranes. In addition, intraplantar injection in mice provokes nocifensive behavior, suggesting a pain-inducing activity. The sequence is that of DELTA-limacoditoxin(2)-Dv11 from Doratifera vulnerans (Mottled cup moth).